Reading from the N-terminus, the 426-residue chain is Histidine--tRNA ligase (426 aa).

This sequence belongs to the class-II aminoacyl-tRNA synthetase family. In terms of assembly, homodimer.

It is found in the cytoplasm. It carries out the reaction tRNA(His) + L-histidine + ATP = L-histidyl-tRNA(His) + AMP + diphosphate + H(+). In Pseudoalteromonas translucida (strain TAC 125), this protein is Histidine--tRNA ligase.